Consider the following 123-residue polypeptide: Large ribosomal subunit protein bL17 (123 aa).

The protein belongs to the bacterial ribosomal protein bL17 family. In terms of assembly, part of the 50S ribosomal subunit. Contacts protein L32.

This is Large ribosomal subunit protein bL17 from Exiguobacterium sibiricum (strain DSM 17290 / CCUG 55495 / CIP 109462 / JCM 13490 / 255-15).